Here is a 439-residue protein sequence, read N- to C-terminus: Probable aspartic-type endopeptidase AFUA_3G01220 (439 aa).

A signal peptide spans 1 to 20 (MHFSIGSLFLYLIASASCTA). The tract at residues 31-50 (RTPFTTSTSKPSAFTNPSTD) is disordered. Residues 32 to 45 (TPFTTSTSKPSAFT) are compositionally biased toward low complexity. The 342-residue stretch at 95 to 436 (FATSINIGNQ…DVGAAEMRFA (342 aa)) folds into the Peptidase A1 domain. N-linked (GlcNAc...) asparagine glycosylation is present at Asn-103. Asp-111 is a catalytic residue. Residues Asn-149, Asn-178, Asn-187, Asn-253, Asn-256, Asn-276, and Asn-308 are each glycosylated (N-linked (GlcNAc...) asparagine). Asp-323 is a catalytic residue. N-linked (GlcNAc...) asparagine glycans are attached at residues Asn-361 and Asn-394.

It belongs to the peptidase A1 family.

The protein localises to the secreted. Functionally, probable aspartic-type endopeptidase which contributes to virulence. In Aspergillus fumigatus (strain ATCC MYA-4609 / CBS 101355 / FGSC A1100 / Af293) (Neosartorya fumigata), this protein is Probable aspartic-type endopeptidase AFUA_3G01220.